Consider the following 87-residue polypeptide: Small ribosomal subunit protein bS20 (87 aa).

This sequence belongs to the bacterial ribosomal protein bS20 family.

Its function is as follows. Binds directly to 16S ribosomal RNA. The sequence is that of Small ribosomal subunit protein bS20 from Roseobacter denitrificans (strain ATCC 33942 / OCh 114) (Erythrobacter sp. (strain OCh 114)).